A 239-amino-acid polypeptide reads, in one-letter code: Small ribosomal subunit protein eS6A (239 aa).

A phosphoserine mark is found at Ser-235 and Ser-236.

The protein belongs to the eukaryotic ribosomal protein eS6 family. In terms of assembly, component of the small ribosomal subunit (SSU). Mature yeast ribosomes consist of a small (40S) and a large (60S) subunit. The 40S small subunit contains 1 molecule of ribosomal RNA (18S rRNA) and at least 33 different proteins. The large 60S subunit contains 3 rRNA molecules (25S, 5.8S and 5S rRNA) and at least 46 different proteins. Interacts with snoRNA U3. uS11 interacts with MPP10. Component of the ribosomal small subunit (SSU) processome composed of at least 40 protein subunits and snoRNA U3. In terms of processing, phosphorylated.

The protein localises to the cytoplasm. Functionally, component of the ribosome, a large ribonucleoprotein complex responsible for the synthesis of proteins in the cell. The small ribosomal subunit (SSU) binds messenger RNAs (mRNAs) and translates the encoded message by selecting cognate aminoacyl-transfer RNA (tRNA) molecules. The large subunit (LSU) contains the ribosomal catalytic site termed the peptidyl transferase center (PTC), which catalyzes the formation of peptide bonds, thereby polymerizing the amino acids delivered by tRNAs into a polypeptide chain. The nascent polypeptides leave the ribosome through a tunnel in the LSU and interact with protein factors that function in enzymatic processing, targeting, and the membrane insertion of nascent chains at the exit of the ribosomal tunnel. eS6 is involved in nucleolar processing of pre-18S ribosomal RNA and ribosome assembly. In Schizosaccharomyces pombe (strain 972 / ATCC 24843) (Fission yeast), this protein is Small ribosomal subunit protein eS6A (rps601).